Reading from the N-terminus, the 292-residue chain is uncharacterized protein (292 aa).

Residue lysine 8 forms a Glycyl lysine isopeptide (Lys-Gly) (interchain with G-Cter in SUMO2) linkage. Positions 47–67 (TKRKMLPSSSSRMRSDGFDEE) are disordered. Lysine 76 participates in a covalent cross-link: Glycyl lysine isopeptide (Lys-Gly) (interchain with G-Cter in SUMO2). A Phosphothreonine modification is found at asparagine 94. Residues lysine 96 and phenylalanine 97 each carry the phosphoserine modification. Residues 122–292 (ETDSDQQDIT…ERSAESSEDD (171 aa)) are disordered. Threonine 123 bears the Phosphothreonine mark. Phosphoserine is present on residues serine 125 and aspartate 126. Polar residues predominate over residues 128–140 (QDITNGKKTSPQV). Positions 147–173 (SRKHKKSKKSHKKKQKKRSHKKQKKSK) are enriched in basic residues. Residues 180–194 (TADSSSEFSEETGAS) are compositionally biased toward polar residues. Composition is skewed to basic residues over residues 197–215 (RKGK…KSLK) and 247–259 (KKTK…KKAH). Residues 280 to 292 (ATDERSAESSEDD) show a composition bias toward basic and acidic residues.

This is an uncharacterized protein from Homo sapiens (Human).